The following is a 365-amino-acid chain: tRNA 2-selenouridine synthase (365 aa).

One can recognise a Rhodanese domain in the interval leucine 15–aspartate 138. Catalysis depends on cysteine 98, which acts as the S-selanylcysteine intermediate.

This sequence belongs to the SelU family. Monomer.

It carries out the reaction 5-methylaminomethyl-2-thiouridine(34) in tRNA + selenophosphate + (2E)-geranyl diphosphate + H2O + H(+) = 5-methylaminomethyl-2-selenouridine(34) in tRNA + (2E)-thiogeraniol + phosphate + diphosphate. The enzyme catalyses 5-methylaminomethyl-2-thiouridine(34) in tRNA + (2E)-geranyl diphosphate = 5-methylaminomethyl-S-(2E)-geranyl-thiouridine(34) in tRNA + diphosphate. The catalysed reaction is 5-methylaminomethyl-S-(2E)-geranyl-thiouridine(34) in tRNA + selenophosphate + H(+) = 5-methylaminomethyl-2-(Se-phospho)selenouridine(34) in tRNA + (2E)-thiogeraniol. It catalyses the reaction 5-methylaminomethyl-2-(Se-phospho)selenouridine(34) in tRNA + H2O = 5-methylaminomethyl-2-selenouridine(34) in tRNA + phosphate. Involved in the post-transcriptional modification of the uridine at the wobble position (U34) of tRNA(Lys), tRNA(Glu) and tRNA(Gln). Catalyzes the conversion of 2-thiouridine (S2U-RNA) to 2-selenouridine (Se2U-RNA). Acts in a two-step process involving geranylation of 2-thiouridine (S2U) to S-geranyl-2-thiouridine (geS2U) and subsequent selenation of the latter derivative to 2-selenouridine (Se2U) in the tRNA chain. This Shewanella pealeana (strain ATCC 700345 / ANG-SQ1) protein is tRNA 2-selenouridine synthase.